The primary structure comprises 97 residues: MAVMLKPWTVVATVLICVLLCLGTFVDAYPPKPENPGDDAAPEELAKYYTALRHYINLITRQRYGKRSTSEDVMAELLFGDDTEHKQRSRYDDSFMW.

The first 28 residues, 1-28 (MAVMLKPWTVVATVLICVLLCLGTFVDA), serve as a signal peptide directing secretion. A Tyrosine amide modification is found at tyrosine 64. A propeptide spans 68 to 97 (STSEDVMAELLFGDDTEHKQRSRYDDSFMW) (C-terminal extension).

It belongs to the NPY family. In terms of tissue distribution, mainly expressed in brainstem neurons, and in the telencephalon. Also expressed in intestinal endocrine cells.

It is found in the secreted. This Danio rerio (Zebrafish) protein is Peptide YY-A (pyya).